Here is a 49-residue protein sequence, read N- to C-terminus: KLGDQRQIDIASWNTFDFGGVXKANANTGIGNVVIERTDNPNTVPYIPA.

It is found in the secreted. Its function is as follows. Very potent toxin that exhibits a wide range of toxicities over various organisms and cells including brine shrimp larvae (Artemia salina), sea hare eggs (Aplysia kurodai), mice, and cultured mammalian cells. An SOR-containing fraction cleaves plasmid DNA in a bivalent metal ion dependent manner suggesting genotoxicity of SOR. In Spongosorites sp. (strain QM G324170) (Okinawan marine Sponge), this protein is Soritesidine.